The primary structure comprises 430 residues: Levansucrase Lscgamma (430 aa).

Sucrose is bound by residues Trp60, Asp61, Ala147, Arg217, and Asp218. Residue Asp61 is the Nucleophile of the active site. The Proton donor/acceptor role is filled by Glu302.

It belongs to the glycosyl hydrolase 68 family. Homodimer.

It carries out the reaction [6)-beta-D-fructofuranosyl-(2-&gt;](n) alpha-D-glucopyranoside + sucrose = [6)-beta-D-fructofuranosyl-(2-&gt;](n+1) alpha-D-glucopyranoside + D-glucose. With respect to regulation, sucrose hydrolase activity is negatively affected by salt concentration. The levan polymerization rate increases sharply in relation to sucrose concentration reaching the maximum at 100 mM sucrose, and then steadily decreases, suggesting a strong inhibition of the activity by the substrate. Catalyzes the synthesis of levan, a fructose polymer, by transferring the fructosyl moiety from sucrose to a growing acceptor molecule. Also displays sucrose hydrolase activity. Can depolymerize the levan produced once substrate is completely exhausted. In Pseudomonas syringae pv. actinidiae, this protein is Levansucrase Lscgamma.